Consider the following 118-residue polypeptide: Beta-2-microglobulin (118 aa).

An N-terminal signal peptide occupies residues 1–20 (MARVVALVLLGLLSLTGLEA). The Ig-like C1-type domain maps to 25–111 (PKVQVYSRHP…QHSTLKEPLI (87 aa)). A disulfide bridge links cysteine 45 with cysteine 99.

Belongs to the beta-2-microglobulin family. As to quaternary structure, heterodimer of an alpha chain and a beta chain. Beta-2-microglobulin is the beta-chain of major histocompatibility complex class I molecules.

The protein localises to the secreted. Functionally, component of the class I major histocompatibility complex (MHC). Involved in the presentation of peptide antigens to the immune system. This is Beta-2-microglobulin (B2M) from Equus asinus (Donkey).